The chain runs to 606 residues: Probable potassium transport system protein Kup (606 aa).

12 helical membrane passes run 18–38, 46–66, 97–117, 138–158, 166–186, 212–232, 247–267, 287–307, 339–359, 368–388, 395–415, and 418–438; these read GLVF…VFAL, VFGI…AEYA, LTFV…DGVI, GLHQ…LFVF, VAGA…LSGA, GLAG…GEAL, AWYI…AFII, LYIP…QAMI, IYIG…MLVF, AYGL…ILIL, WKAV…TACL, and LPHG…TILV.

This sequence belongs to the HAK/KUP transporter (TC 2.A.72) family.

The protein localises to the cell inner membrane. It catalyses the reaction K(+)(in) + H(+)(in) = K(+)(out) + H(+)(out). Its function is as follows. Transport of potassium into the cell. Likely operates as a K(+):H(+) symporter. The protein is Probable potassium transport system protein Kup of Trichlorobacter lovleyi (strain ATCC BAA-1151 / DSM 17278 / SZ) (Geobacter lovleyi).